The chain runs to 842 residues: Homeobox-leucine zipper protein REVOLUTA (842 aa).

Residues 1–20 (MEMAVANHRERSSDSMNRHL) are disordered. Basic and acidic residues predominate over residues 7–20 (NHRERSSDSMNRHL). The segment at residues 22–85 (SSGKYVRYTA…NRRCRDKQRK (64 aa)) is a DNA-binding region (homeobox). Positions 90–121 (LQSVNRKLSAMNKLLMEENDRLQKQVSQLVCE) form a coiled coil. Residues 151–379 (DANSPAGLLS…LAQESNGEVV (229 aa)) enclose the START domain.

The protein belongs to the HD-ZIP homeobox family. Class III subfamily. As to quaternary structure, homodimer. Heterodimer with ZPR1, ZPR2, ZPR3 or ZPR4. Interacts with ESR1 and ESR2. Interacts with ZPR1, ZPR2, ZPR3 and ZPR4. Heterodimerization with ZPR3 prevents DNA binding by REV. In terms of tissue distribution, expressed in the interfascicular regions of stem and vascular bundles of young roots and leaves.

It is found in the nucleus. Functionally, probable transcription factor involved in the regulation of interfascicular fiber (cortical cells) and secondary xylem differentiation in the inflorescence stems. Required for lateral shoot meristems (LSMs) and flower meristems (FMs) initiation. May be involved in the determination of vascular patterning and organ polarity. Directly regulates the expression of AGO10, ZPR1, ZPR2, ZPR3 and ZPR4. Required to regulate adaxial-abaxial polarity and leaf axial patterning. The polypeptide is Homeobox-leucine zipper protein REVOLUTA (Arabidopsis thaliana (Mouse-ear cress)).